Reading from the N-terminus, the 231-residue chain is Sporulation protein RMD6 (231 aa).

Its subcellular location is the peroxisome. In terms of biological role, required for sporulation. Required for meiotic nuclear division. The polypeptide is Sporulation protein RMD6 (RMD6) (Saccharomyces cerevisiae (strain ATCC 204508 / S288c) (Baker's yeast)).